The following is a 607-amino-acid chain: MDMQERYNRRENIRNFSIIAHIDHGKSTLADRILENTKSVETREMQDQLLDSMDLERERGITIKLNAVRLKYEANDGQTYTFHLIDTPGHVDFSYEVSRSLAACEGAILVVDAAQGIEAQTLANVYLALDNDLELLPVVNKIDLPAAEPERVKQELEDVIGLNQDDVVLASAKSNIGIEDILEKIVEVVPPPEGDPSEPLKALIFDSEYDPYRGVISSIRVMEGVVKAGDKIKMMATGKEFEVSEVGINTPKQLPIEELTVGDVGYIIASIKNVDDSRVGDTITHANRPAEAPLKGYKKMNPMVYCGLFPIENKDYNDLREALEKLQLNDASLEFEPESSQALGFGFRTGFLGMLHMEIIQERIEREFGIELIATAPSVIYQCIMKDGSEVTVDNPAQMPERDKIDSIYEPYVKATMMVPNDYVGAVMELCQRKRGQFINMDYLDDIRVNIVYEIPLSEVVFDFFDQLKSNTKGYASFDYEFIENKESNLVKMDILLNGDKVDALSFIVHKDFAYERGKALVEKLKTLIPRQQFEVPVQAAIGQKIVARTNIKSMGKNVLSKCYGGDISRKRKLLEKQKAGKAKMKAVGSVEIPQDAFLAVLKMDDE.

A tr-type G domain is found at Glu-11–Glu-193. Residues Asp-23 to Thr-28 and Asn-140 to Asp-143 contribute to the GTP site.

It belongs to the TRAFAC class translation factor GTPase superfamily. Classic translation factor GTPase family. LepA subfamily.

The protein resides in the cell membrane. It catalyses the reaction GTP + H2O = GDP + phosphate + H(+). Functionally, required for accurate and efficient protein synthesis under certain stress conditions. May act as a fidelity factor of the translation reaction, by catalyzing a one-codon backward translocation of tRNAs on improperly translocated ribosomes. Back-translocation proceeds from a post-translocation (POST) complex to a pre-translocation (PRE) complex, thus giving elongation factor G a second chance to translocate the tRNAs correctly. Binds to ribosomes in a GTP-dependent manner. The sequence is that of Elongation factor 4 from Staphylococcus haemolyticus (strain JCSC1435).